Reading from the N-terminus, the 315-residue chain is Lipoyl synthase (315 aa).

[4Fe-4S] cluster-binding residues include cysteine 63, cysteine 68, cysteine 74, cysteine 89, cysteine 93, cysteine 96, and serine 303. The region spanning 75–292 (FSKGTATFMI…EEKAYEMGFV (218 aa)) is the Radical SAM core domain.

Belongs to the radical SAM superfamily. Lipoyl synthase family. [4Fe-4S] cluster is required as a cofactor.

The protein resides in the cytoplasm. It catalyses the reaction [[Fe-S] cluster scaffold protein carrying a second [4Fe-4S](2+) cluster] + N(6)-octanoyl-L-lysyl-[protein] + 2 oxidized [2Fe-2S]-[ferredoxin] + 2 S-adenosyl-L-methionine + 4 H(+) = [[Fe-S] cluster scaffold protein] + N(6)-[(R)-dihydrolipoyl]-L-lysyl-[protein] + 4 Fe(3+) + 2 hydrogen sulfide + 2 5'-deoxyadenosine + 2 L-methionine + 2 reduced [2Fe-2S]-[ferredoxin]. It participates in protein modification; protein lipoylation via endogenous pathway; protein N(6)-(lipoyl)lysine from octanoyl-[acyl-carrier-protein]: step 2/2. In terms of biological role, catalyzes the radical-mediated insertion of two sulfur atoms into the C-6 and C-8 positions of the octanoyl moiety bound to the lipoyl domains of lipoate-dependent enzymes, thereby converting the octanoylated domains into lipoylated derivatives. This chain is Lipoyl synthase, found in Chromobacterium violaceum (strain ATCC 12472 / DSM 30191 / JCM 1249 / CCUG 213 / NBRC 12614 / NCIMB 9131 / NCTC 9757 / MK).